The following is a 56-amino-acid chain: Large ribosomal subunit protein bL33 (56 aa).

This sequence belongs to the bacterial ribosomal protein bL33 family.

This chain is Large ribosomal subunit protein bL33, found in Anaplasma marginale (strain Florida).